The primary structure comprises 113 residues: MAIAVGMIETLGFPAVVEAADAMVKAARVTLVGYEKIGSGRVTVIVRGDVSEVQASVAAGVENVKRVNGGQVLSTHIIARPHENLEYVLPIRYTEAVEQFRESVSGIRPMGRP.

A BMC domain is found at 4–90 (AVGMIETLGF…PHENLEYVLP (87 aa)).

Belongs to the bacterial microcompartments protein family. CcmK subfamily. Homohexamer. Interacts preferentially with CcmK2 and CcmK4a rather than itself in vitro.

Its subcellular location is the carboxysome. One of the shell proteins of the carboxysome, a polyhedral inclusion where RuBisCO (ribulose bisphosphate carboxylase, rbcL-rbcS) is sequestered. Assembles into hexamers which make sheets that form the facets of the polyhedral carboxysome. The hexamer central pore probably regulates metabolite flux. The protein is Carboxysome shell protein CcmK1 of Thermosynechococcus vestitus (strain NIES-2133 / IAM M-273 / BP-1).